We begin with the raw amino-acid sequence, 400 residues long: Leukosialin (400 aa).

The first 19 residues, 1-19, serve as a signal peptide directing secretion; the sequence is MATLLLLLGVLVVSPDALG. The Extracellular portion of the chain corresponds to 20 to 253; it reads STTAVQTPTS…PFRNPDENSR (234 aa). Thr-21, Thr-22, Thr-26, and Thr-28 each carry an O-linked (GalNAc...) threonine glycan. Composition is skewed to polar residues over residues 21–51 and 58–112; these read TTAVQTPTSGEPLVSTSEPLSSKMYTTSITS and TGDQ…TPHA. The interval 21 to 224 is disordered; it reads TTAVQTPTSG…SSGASGPQVS (204 aa). O-linked (GalNAc...) serine glycans are attached at residues Ser-29 and Ser-35. The O-linked (GalNAc...) threonine glycan is linked to Thr-36. O-linked (GalNAc...) serine glycans are attached at residues Ser-37, Ser-41, and Ser-42. O-linked (GalNAc...) threonine glycosylation is found at Thr-46 and Thr-47. Ser-48 carries an O-linked (GalNAc...) serine glycan. Thr-50, Thr-58, and Thr-69 each carry an O-linked (GalNAc...) threonine glycan. Ser-99 and Ser-103 each carry an O-linked (GalNAc...) serine glycan. 2 O-linked (GalNAc...) threonine glycosylation sites follow: Thr-109 and Thr-113. Ser-114 carries an O-linked (GalNAc...) serine glycan. 2 stretches are compositionally biased toward polar residues: residues 121 to 164 and 172 to 182; these read TANS…SRGT and ATVSLETSKGT. 4 O-linked (GalNAc...) threonine glycosylation sites follow: Thr-136, Thr-137, Thr-173, and Thr-178. Residues 196–211 show a composition bias toward low complexity; it reads TSTGTTGPPVTMTTGS. Residues 212–224 show a composition bias toward polar residues; that stretch reads LEPSSGASGPQVS. Residue Asn-239 is glycosylated (N-linked (GlcNAc...) asparagine). Residues 254–276 traverse the membrane as a helical segment; it reads GMLPVAVLVALLAVIVLVALLLL. The Cytoplasmic segment spans residues 277-400; it reads WRRRQKRRTG…EPEGGDGAAP (124 aa). Positions 278 to 308 are required for interaction with EZR, MSN and RDX and for co-localization to microvilli; it reads RRRQKRRTGALVLSRGGKRNGVVDAWAGPAQ. The Nuclear localization signal motif lies at 282–296; that stretch reads KRRTGALVLSRGGKR. Ser-291 is modified (phosphoserine). Over residues 320–332 the composition is skewed to gly residues; that stretch reads GGSGGDKGSGFPD. Residues 320–400 are disordered; that stretch reads GGSGGDKGSG…EPEGGDGAAP (81 aa). Residue Ser-336 is modified to Phosphoserine. A Phosphothreonine modification is found at Thr-341. Phosphoserine is present on Ser-351. Residue Ser-355 is modified to Phosphoserine; by PKC/PRKCQ. Phosphoserine occurs at positions 368 and 379.

Interacts with SIGLEC1. As to quaternary structure, monomer. Interacts with CTNNB1. Interacts with RDX (via FERM domain), EZR and MSN. Post-translationally, glycosylated; has a high content of sialic acid and O-linked carbohydrate structures. In terms of processing, phosphorylation at Ser-355 is regulated by chemokines, requires its association with ERM proteins (EZR, RDX and MSN) and is essential for its function in the regulation of T-cell trafficking to lymph nodes. Has a high content of sialic acid and O-linked carbohydrate structures. Post-translationally, cleavage by CTSG releases its extracellular domain and triggers its intramembrane proteolysis by gamma-secretase releasing the CD43 cytoplasmic tail chain (CD43-ct) which translocates to the nucleus. In terms of processing, sumoylated. As to expression, cell surface of thymocytes, T-lymphocytes, neutrophils, plasma cells and myelomas.

The protein resides in the membrane. It localises to the cell projection. It is found in the microvillus. Its subcellular location is the uropodium. The protein localises to the nucleus. The protein resides in the PML body. Functionally, predominant cell surface sialoprotein of leukocytes which regulates multiple T-cell functions, including T-cell activation, proliferation, differentiation, trafficking and migration. Positively regulates T-cell trafficking to lymph-nodes via its association with ERM proteins (EZR, RDX and MSN). Negatively regulates Th2 cell differentiation and predisposes the differentiation of T-cells towards a Th1 lineage commitment. Promotes the expression of IFN-gamma by T-cells during T-cell receptor (TCR) activation of naive cells and induces the expression of IFN-gamma by CD4(+) T-cells and to a lesser extent by CD8(+) T-cells. Plays a role in preparing T-cells for cytokine sensing and differentiation into effector cells by inducing the expression of cytokine receptors IFNGR and IL4R, promoting IFNGR and IL4R signaling and by mediating the clustering of IFNGR with TCR. Acts as a major E-selectin ligand responsible for Th17 cell rolling on activated vasculature and recruitment during inflammation. Mediates Th17 cells, but not Th1 cells, adhesion to E-selectin. Acts as a T-cell counter-receptor for SIGLEC1. Protects cells from apoptotic signals, promoting cell survival. The chain is Leukosialin (SPN) from Homo sapiens (Human).